A 678-amino-acid polypeptide reads, in one-letter code: Auxin response factor 7 (678 aa).

The segment at residues 128–230 (FCKTLTASDT…ELRVGVRRLM (103 aa)) is a DNA-binding region (TF-B3). Disordered regions lie at residues 360 to 386 (AVSN…NSIA) and 502 to 547 (GVGQ…SRQV). The 94-residue stretch at 548 to 641 (RSCTKVIMQG…EAKQLTPKSK (94 aa)) folds into the PB1 domain. The disordered stretch occupies residues 643 to 678 (PIIGDAIKPNPNKQSPESDMPHSDLDSTAPVTDKDC).

Belongs to the ARF family. As to quaternary structure, homodimers and heterodimers. As to expression, expressed in roots, culms, leaves and young panicles.

The protein resides in the nucleus. In terms of biological role, auxin response factors (ARFs) are transcriptional factors that bind specifically to the DNA sequence 5'-TGTCTC-3' found in the auxin-responsive promoter elements (AuxREs). In Oryza sativa subsp. japonica (Rice), this protein is Auxin response factor 7 (ARF7).